The chain runs to 203 residues: Small ribosomal subunit protein uS4 (203 aa).

Residues 93–153 (RRFDNVVFRA…QKSQNLDAVA (61 aa)) form the S4 RNA-binding domain.

It belongs to the universal ribosomal protein uS4 family. As to quaternary structure, part of the 30S ribosomal subunit. Contacts protein S5. The interaction surface between S4 and S5 is involved in control of translational fidelity.

One of the primary rRNA binding proteins, it binds directly to 16S rRNA where it nucleates assembly of the body of the 30S subunit. In terms of biological role, with S5 and S12 plays an important role in translational accuracy. The protein is Small ribosomal subunit protein uS4 of Chlorobium phaeobacteroides (strain BS1).